A 921-amino-acid polypeptide reads, in one-letter code: Protein translocase subunit SecA (921 aa).

Residues glutamine 86, 104–108, and aspartate 512 contribute to the ATP site; that span reads GEGKT. Residues cysteine 905, cysteine 907, cysteine 916, and histidine 917 each contribute to the Zn(2+) site.

The protein belongs to the SecA family. In terms of assembly, monomer and homodimer. Part of the essential Sec protein translocation apparatus which comprises SecA, SecYEG and auxiliary proteins SecDF-YajC and YidC. Requires Zn(2+) as cofactor.

The protein resides in the cell inner membrane. It localises to the cytoplasm. The enzyme catalyses ATP + H2O + cellular proteinSide 1 = ADP + phosphate + cellular proteinSide 2.. Its function is as follows. Part of the Sec protein translocase complex. Interacts with the SecYEG preprotein conducting channel. Has a central role in coupling the hydrolysis of ATP to the transfer of proteins into and across the cell membrane, serving both as a receptor for the preprotein-SecB complex and as an ATP-driven molecular motor driving the stepwise translocation of polypeptide chains across the membrane. The protein is Protein translocase subunit SecA of Caulobacter sp. (strain K31).